Consider the following 171-residue polypeptide: Large ribosomal subunit protein uL10 (171 aa).

The protein belongs to the universal ribosomal protein uL10 family. In terms of assembly, part of the ribosomal stalk of the 50S ribosomal subunit. The N-terminus interacts with L11 and the large rRNA to form the base of the stalk. The C-terminus forms an elongated spine to which L12 dimers bind in a sequential fashion forming a multimeric L10(L12)X complex.

In terms of biological role, forms part of the ribosomal stalk, playing a central role in the interaction of the ribosome with GTP-bound translation factors. This is Large ribosomal subunit protein uL10 from Corynebacterium glutamicum (strain R).